The sequence spans 246 residues: Zinc import ATP-binding protein ZnuC (246 aa).

Positions 24 to 244 (LKIENLALAY…TLGEIFSSYI (221 aa)) constitute an ABC transporter domain. Residue 56 to 63 (GPNGGGKT) coordinates ATP.

This sequence belongs to the ABC transporter superfamily. Zinc importer (TC 3.A.1.15.5) family. The complex is composed of two ATP-binding proteins (ZnuC), two transmembrane proteins (ZnuB) and a solute-binding protein (ZnuA).

The protein resides in the cell membrane. The catalysed reaction is Zn(2+)(out) + ATP(in) + H2O(in) = Zn(2+)(in) + ADP(in) + phosphate(in) + H(+)(in). Its function is as follows. Part of the ABC transporter complex ZnuABC involved in zinc import. Responsible for energy coupling to the transport system. The polypeptide is Zinc import ATP-binding protein ZnuC (Wolbachia sp. subsp. Brugia malayi (strain TRS)).